The sequence spans 597 residues: Phragmoplastin interacting protein 1 (597 aa).

Residues 18 to 136 (ESLSVSVSET…KTPKKAEEGN (119 aa)) form a disordered region. Positions 20–29 (LSVSVSETNP) are enriched in polar residues. A compositionally biased stretch (low complexity) spans 30 to 40 (QSQSLKLLLDS). Composition is skewed to basic residues over residues 43–53 (HKPRLSKREKR) and 112–129 (QKKK…NKTP). Positions 112 to 119 (QKKKNKKK) match the Nuclear localization signal motif. RRM domains lie at 161 to 238 (NKLY…QYVK) and 262 to 338 (NRVY…CALK). 3 consecutive CCHC-type zinc fingers follow at residues 397–411 (CYEC…TACP), 481–495 (CYEC…TACP), and 576–591 (CYEC…ACPN).

In terms of assembly, interacts with phragmoplastins (e.g. DRP1A, DRP1B, DRP1C, DRP1D and DRP1E) and with GTP-bound ARAC11/ROP1 as well as with Ran2 transcripts.

The protein localises to the nucleus. The protein resides in the cell membrane. It localises to the cytoplasm. Its subcellular location is the cytoskeleton. It is found in the phragmoplast. RNA-binding protein which mediates polarized mRNA (e.g. Ran2 transcripts mRNA) transport from the nucleus to the vicinity of the cell plate during cytokinesis and phragmoplast formation. This Arabidopsis thaliana (Mouse-ear cress) protein is Phragmoplastin interacting protein 1.